The chain runs to 204 residues: Probable proteasome subunit beta type-3 (204 aa).

It belongs to the peptidase T1B family. In terms of assembly, the 26S proteasome consists of a 20S proteasome core and two 19S regulatory subunits. The 20S proteasome core is composed of 28 subunits that are arranged in four stacked rings, resulting in a barrel-shaped structure. The two end rings are each formed by seven alpha subunits, and the two central rings are each formed by seven beta subunits. The catalytic chamber with the active sites is on the inside of the barrel.

It localises to the cytoplasm. Its subcellular location is the nucleus. Non-catalytic component of the proteasome, a multicatalytic proteinase complex which is characterized by its ability to cleave peptides with Arg, Phe, Tyr, Leu, and Glu adjacent to the leaving group at neutral or slightly basic pH. The proteasome has an ATP-dependent proteolytic activity. This is Probable proteasome subunit beta type-3 (pup3) from Schizosaccharomyces pombe (strain 972 / ATCC 24843) (Fission yeast).